The sequence spans 486 residues: Replication factor C large subunit (486 aa).

ATP is bound at residue 46–53; that stretch reads GPPGSGKT. Residues 419-486 form a disordered region; that stretch reads VKKETPKKTE…KKQATLDSFF (68 aa). Basic and acidic residues-rich tracts occupy residues 420 to 432 and 442 to 480; these read KKET…KPKE and RISE…KKQA.

The protein belongs to the activator 1 small subunits family. RfcL subfamily. Heteromultimer composed of small subunits (RfcS) and large subunits (RfcL).

In terms of biological role, part of the RFC clamp loader complex which loads the PCNA sliding clamp onto DNA. The polypeptide is Replication factor C large subunit (Methanococcus maripaludis (strain DSM 14266 / JCM 13030 / NBRC 101832 / S2 / LL)).